The sequence spans 717 residues: Glycine--tRNA ligase beta subunit (717 aa).

This sequence belongs to the class-II aminoacyl-tRNA synthetase family. As to quaternary structure, tetramer of two alpha and two beta subunits.

Its subcellular location is the cytoplasm. It carries out the reaction tRNA(Gly) + glycine + ATP = glycyl-tRNA(Gly) + AMP + diphosphate. This chain is Glycine--tRNA ligase beta subunit, found in Gloeothece citriformis (strain PCC 7424) (Cyanothece sp. (strain PCC 7424)).